The chain runs to 90 residues: Translation initiation factor IF-1 2 (90 aa).

In terms of domain architecture, S1-like spans 1–72 (MAKEELLELD…TKGRINFRHK (72 aa)).

It belongs to the IF-1 family. As to quaternary structure, component of the 30S ribosomal translation pre-initiation complex which assembles on the 30S ribosome in the order IF-2 and IF-3, IF-1 and N-formylmethionyl-tRNA(fMet); mRNA recruitment can occur at any time during PIC assembly.

The protein resides in the cytoplasm. Functionally, one of the essential components for the initiation of protein synthesis. Stabilizes the binding of IF-2 and IF-3 on the 30S subunit to which N-formylmethionyl-tRNA(fMet) subsequently binds. Helps modulate mRNA selection, yielding the 30S pre-initiation complex (PIC). Upon addition of the 50S ribosomal subunit IF-1, IF-2 and IF-3 are released leaving the mature 70S translation initiation complex. The sequence is that of Translation initiation factor IF-1 2 from Paraburkholderia xenovorans (strain LB400).